A 175-amino-acid polypeptide reads, in one-letter code: Nucleoside triphosphate/diphosphate phosphatase (175 aa).

Arginine 23 functions as the Proton donor in the catalytic mechanism. Positions 87, 103, 105, 107, 120, and 123 each coordinate Mg(2+).

It belongs to the Ntdp family. Requires Mg(2+) as cofactor.

It catalyses the reaction a ribonucleoside 5'-triphosphate + H2O = a ribonucleoside 5'-diphosphate + phosphate + H(+). It carries out the reaction a ribonucleoside 5'-diphosphate + H2O = a ribonucleoside 5'-phosphate + phosphate + H(+). Functionally, has nucleoside phosphatase activity towards nucleoside triphosphates and nucleoside diphosphates. The protein is Nucleoside triphosphate/diphosphate phosphatase of Oceanobacillus iheyensis (strain DSM 14371 / CIP 107618 / JCM 11309 / KCTC 3954 / HTE831).